The following is a 361-amino-acid chain: Alanine racemase 2 (361 aa).

The Proton acceptor; specific for D-alanine role is filled by K30. The residue at position 30 (K30) is an N6-(pyridoxal phosphate)lysine. R122 contributes to the substrate binding site. Y256 serves as the catalytic Proton acceptor; specific for L-alanine. Substrate is bound at residue M303.

It belongs to the alanine racemase family. The cofactor is pyridoxal 5'-phosphate.

It catalyses the reaction L-alanine = D-alanine. Its pathway is amino-acid biosynthesis; D-alanine biosynthesis; D-alanine from L-alanine: step 1/1. Functionally, catalyzes the interconversion of L-alanine and D-alanine. May also act on other amino acids. This chain is Alanine racemase 2 (alr2), found in Staphylococcus aureus (strain COL).